The primary structure comprises 60 residues: Potassium channel toxin ImKTx88 (60 aa).

An N-terminal signal peptide occupies residues 1-22 (MSNFSVFLIALLFCSVFILSEA). 3 disulfides stabilise this stretch: C30–C51, C36–C56, and C40–C58.

It belongs to the short scorpion toxin superfamily. Potassium channel inhibitor family. In terms of tissue distribution, expressed by the venom gland.

It localises to the secreted. In terms of biological role, recombinant toxin selectively inhibits Kv1.3/KCNA3 potassium channels with an IC(50) of 91 pM. The sequence is that of Potassium channel toxin ImKTx88 from Isometrus maculatus (Lesser brown scorpion).